Consider the following 174-residue polypeptide: Peptide deformylase (174 aa).

The Fe cation site is built by C98 and H140. E141 is an active-site residue. Residue H144 coordinates Fe cation.

The protein belongs to the polypeptide deformylase family. Requires Fe(2+) as cofactor.

The catalysed reaction is N-terminal N-formyl-L-methionyl-[peptide] + H2O = N-terminal L-methionyl-[peptide] + formate. Removes the formyl group from the N-terminal Met of newly synthesized proteins. Requires at least a dipeptide for an efficient rate of reaction. N-terminal L-methionine is a prerequisite for activity but the enzyme has broad specificity at other positions. In Bradyrhizobium diazoefficiens (strain JCM 10833 / BCRC 13528 / IAM 13628 / NBRC 14792 / USDA 110), this protein is Peptide deformylase.